The sequence spans 1203 residues: Metabotropic glutamate receptor 5 (1203 aa).

A signal peptide spans 1 to 18 (MVLLLILSVLLLKEDVRG). Residues 19-579 (SAQSSERRVV…QYLRWGDPEP (561 aa)) are Extracellular-facing. The cysteines at positions 57 and 99 are disulfide-linked. Y64 is a binding site for L-glutamate. N88 is a glycosylation site (N-linked (GlcNAc...) asparagine). L-glutamate contacts are provided by residues S151 and 172–174 (SAT). N209 carries N-linked (GlcNAc...) asparagine glycosylation. Y222 is an L-glutamate binding site. Cystine bridges form between C240–C529, C275–C277, C364–C380, C418–C425, C510–C530, C514–C533, C536–C548, and C551–C564. D304 is an L-glutamate binding site. N-linked (GlcNAc...) asparagine glycosylation is found at N377 and N381. Residue K395 coordinates L-glutamate. The N-linked (GlcNAc...) asparagine glycan is linked to N444. A helical transmembrane segment spans residues 580 to 602 (IAAVVFACLGLLATLFVTVIFII). The Cytoplasmic portion of the chain corresponds to 603 to 612 (YRDTPVVKSS). Residues 613-635 (SRELCYIILAGICLGYLCTFCLI) traverse the membrane as a helical segment. The Extracellular portion of the chain corresponds to 636 to 643 (AKPKQIYC). Residues C643 and C732 are joined by a disulfide bond. A helical membrane pass occupies residues 644 to 666 (YLQRIGIGLSPAMSYSALVTKTN). Topologically, residues 667-692 (RIARILAGSKKKICTKKPRFMSACAQ) are cytoplasmic. The helical transmembrane segment at 693-713 (LVIAFILICIQLGIIVALFIM) threads the bilayer. Residues 714–736 (EPPDIMHDYPSIREVYLICNTTN) are Extracellular-facing. A glycan (N-linked (GlcNAc...) asparagine) is linked at N733. Residues 737 to 758 (LGVVTPLGYNGLLILSCTFYAF) form a helical membrane-spanning segment. The Cytoplasmic portion of the chain corresponds to 759–771 (KTRNVPANFNEAK). Residues 772–794 (YIAFTMYTTCIIWLAFVPIYFGS) traverse the membrane as a helical segment. At 795 to 797 (NYK) the chain is on the extracellular side. The helical transmembrane segment at 798-819 (IITMCFSVSLSATVALGCMFVP) threads the bilayer. The Cytoplasmic segment spans residues 820–1203 (KVYIILAKPE…RDYTQSSSSL (384 aa)). The residue at position 860 (S860) is a Phosphoserine. R868 bears the Omega-N-methylarginine mark. Disordered regions lie at residues 892–1054 (FTPK…GSLM) and 1120–1182 (TGGA…ALCI). Residues 905 to 920 (TMSSSNGKSVTWAQNE) are compositionally biased toward polar residues. R924 is subject to Omega-N-methylarginine. Residues 960–977 (QGAGAGGGSGPGAAGAGS) show a composition bias toward gly residues. Positions 1007–1019 (PAAARPRSPSPIS) are enriched in low complexity. Residues S1014 and S1016 each carry the phosphoserine modification. Composition is skewed to polar residues over residues 1039–1054 (HSET…GSLM) and 1165–1176 (DSGSTTPNSPVS).

It belongs to the G-protein coupled receptor 3 family. The PPXXF motif binds HOMER1, HOMER2 and HOMER3. Interacts with RYR1, RYR2, ITPR1, SHANK1 and SHANK3. Interacts with SIAH1 and TAMALIN. Interacts with NCDN. Interacts with NECAB2. Interacts with CAMK2A.

It localises to the cell membrane. Its function is as follows. G-protein coupled receptor for glutamate. Ligand binding causes a conformation change that triggers signaling via guanine nucleotide-binding proteins (G proteins) and modulates the activity of down-stream effectors. Signaling activates a phosphatidylinositol-calcium second messenger system and generates a calcium-activated chloride current. Plays an important role in the regulation of synaptic plasticity and the modulation of the neural network activity. This is Metabotropic glutamate receptor 5 (Grm5) from Mus musculus (Mouse).